Consider the following 460-residue polypeptide: Lipase member H (460 aa).

The first 24 residues, 1–24 (MLLRFYFNGLLFVGCLLSWGRSDT), serve as a signal peptide directing secretion. 2 N-linked (GlcNAc...) asparagine glycosylation sites follow: Asn67 and Asn75. The Nucleophile role is filled by Ser163. Asn177 is a glycosylation site (N-linked (GlcNAc...) asparagine). Asp187 serves as the catalytic Charge relay system. Residues Cys242 and Cys255 are joined by a disulfide bond. His257 serves as the catalytic Charge relay system. Intrachain disulfides connect Cys279–Cys290 and Cys293–Cys301. Asn289 carries an N-linked (GlcNAc...) asparagine glycan. N-linked (GlcNAc...) asparagine glycosylation occurs at Asn366. The cysteines at positions 436 and 455 are disulfide-linked.

This sequence belongs to the AB hydrolase superfamily. Lipase family.

The protein localises to the secreted. The protein resides in the cell membrane. It carries out the reaction 1-hexadecanoyl-2-(9Z-octadecenoyl)-sn-glycero-3-phosphate + H2O = 2-(9Z-octadecenoyl)-sn-glycero-3-phosphate + hexadecanoate + H(+). Hydrolyzes specifically phosphatidic acid (PA) to produce 2-acyl lysophosphatidic acid (LPA; a potent bioactive lipid mediator) and fatty acid. Does not hydrolyze other phospholipids, like phosphatidylserine (PS), phosphatidylcholine (PC) and phosphatidylethanolamine (PE) or triacylglycerol (TG). This chain is Lipase member H (liph), found in Xenopus tropicalis (Western clawed frog).